Consider the following 277-residue polypeptide: Small ribosomal subunit protein uS2 (277 aa).

The tract at residues M1–E78 is disordered.

The protein belongs to the universal ribosomal protein uS2 family.

This Natronomonas pharaonis (strain ATCC 35678 / DSM 2160 / CIP 103997 / JCM 8858 / NBRC 14720 / NCIMB 2260 / Gabara) (Halobacterium pharaonis) protein is Small ribosomal subunit protein uS2.